A 242-amino-acid chain; its full sequence is MNDVIIRQLAHLIPYQPLWEAMQTFTARRQSQTTDEIWFLEHEPVFTQGLAGKPEHVLNSGNIPLIRTDRGGQVTYHGPGQLMMYLLLDLNRLGLSTRTFVRTIENTVAESLQEWGIPAQGKETAPGVYVDDKKICSIGLRVRKGFSYHGLALNVAMDLTPFSCINPCGFKGLTMTQIQDYVNPIEMDAVKRTIIPLFLKNFGYNQPAIMVETSLEFLIDDHLRSFSEKLGERETVTNSRQN.

In terms of domain architecture, BPL/LPL catalytic spans 31–206; it reads SQTTDEIWFL…LFLKNFGYNQ (176 aa). Residues 70-77, 137-139, and 150-152 contribute to the substrate site; these read RGGQVTYH, SIG, and GLA. Residue Cys168 is the Acyl-thioester intermediate of the active site.

Belongs to the LipB family.

The protein localises to the cytoplasm. The enzyme catalyses octanoyl-[ACP] + L-lysyl-[protein] = N(6)-octanoyl-L-lysyl-[protein] + holo-[ACP] + H(+). It functions in the pathway protein modification; protein lipoylation via endogenous pathway; protein N(6)-(lipoyl)lysine from octanoyl-[acyl-carrier-protein]: step 1/2. In terms of biological role, catalyzes the transfer of endogenously produced octanoic acid from octanoyl-acyl-carrier-protein onto the lipoyl domains of lipoate-dependent enzymes. Lipoyl-ACP can also act as a substrate although octanoyl-ACP is likely to be the physiological substrate. The sequence is that of Octanoyltransferase from Coxiella burnetii (strain RSA 493 / Nine Mile phase I).